A 380-amino-acid polypeptide reads, in one-letter code: Probable polyglutamine synthesis accessory protein MT0602 (380 aa).

This sequence belongs to the CapA family.

In terms of biological role, could be involved in the biosynthesis, transport or localization of poly-alpha-L-glutamine (PLG), a cell wall component. Contributes to stress tolerance and virulence. In Mycobacterium tuberculosis (strain CDC 1551 / Oshkosh), this protein is Probable polyglutamine synthesis accessory protein MT0602.